Reading from the N-terminus, the 180-residue chain is dCTP deaminase, dUMP-forming (180 aa).

DCTP-binding positions include 96–101 (RSSLGR), aspartate 113, 121–123 (TLE), glutamine 142, tyrosine 156, and glutamine 163. The active-site Proton donor/acceptor is the glutamate 123.

Belongs to the dCTP deaminase family. In terms of assembly, homotrimer.

The catalysed reaction is dCTP + 2 H2O = dUMP + NH4(+) + diphosphate. Its pathway is pyrimidine metabolism; dUMP biosynthesis; dUMP from dCTP: step 1/1. Bifunctional enzyme that catalyzes both the deamination of dCTP to dUTP and the hydrolysis of dUTP to dUMP without releasing the toxic dUTP intermediate. The polypeptide is dCTP deaminase, dUMP-forming (Aquifex aeolicus (strain VF5)).